The primary structure comprises 277 residues: Carbonyl reductase [NADPH] 1 (277 aa).

NADP(+) is bound by residues 10 to 34 (VTGANKGVGFAITRALCRLFSGDVL), 63 to 64 (DI), and N90. At S30 the chain carries Phosphoserine. Residues 95-97 (FKM) and Q106 contribute to the glutathione site. S140 lines the substrate pocket. 193–194 (AY) contributes to the glutathione binding site. Y194 (proton acceptor) is an active-site residue. Residues 194–198 (YGVTK) and 231–233 (VRT) contribute to the NADP(+) site.

The protein belongs to the short-chain dehydrogenases/reductases (SDR) family. Monomer. Present in liver and kidney.

The protein localises to the cytoplasm. The enzyme catalyses a secondary alcohol + NADP(+) = a ketone + NADPH + H(+). It carries out the reaction prostaglandin F2alpha + NADP(+) = prostaglandin E2 + NADPH + H(+). It catalyses the reaction prostaglandin E1 + NADP(+) = 15-oxoprostaglandin E1 + NADPH + H(+). The catalysed reaction is menadione + NADPH + H(+) = menadiol + NADP(+). The enzyme catalyses prostaglandin D2 + NADP(+) = 15-oxoprostaglandin D2 + NADPH + H(+). It carries out the reaction prostaglandin E2 + NADP(+) = 15-oxoprostaglandin E2 + NADPH + H(+). It catalyses the reaction prostaglandin F2alpha + NADP(+) = 15-oxoprostaglandin F2alpha + NADPH + H(+). The catalysed reaction is daunorubicin + NADPH + H(+) = 13-dihydrodaunorubicin + NADP(+). The enzyme catalyses S-nitrosoglutathione + NADPH + H(+) = S-(hydroxysulfenamide)glutathione + NADP(+). It carries out the reaction a primary alcohol + NADP(+) = an aldehyde + NADPH + H(+). It catalyses the reaction cortisol + NADPH + H(+) = 20beta-dihydrocortisol + NADP(+). The catalysed reaction is corticosterone + NADPH + H(+) = 20beta-dihydrocorticosterone + NADP(+). Its function is as follows. NADPH-dependent reductase with broad substrate specificity. Catalyzes the reduction of a wide variety of carbonyl compounds including quinones, prostaglandins, menadione, plus various xenobiotics. Catalyzes the reduction of the antitumor anthracyclines doxorubicin and daunorubicin to the cardiotoxic compounds doxorubicinol and daunorubicinol. Can convert prostaglandin E to prostaglandin F2-alpha. Can bind glutathione, which explains its higher affinity for glutathione-conjugated substrates. Catalyzes the reduction of S-nitrosoglutathione. In addition, participates in the glucocorticoid metabolism by catalyzing the NADPH-dependent cortisol/corticosterone into 20beta-dihydrocortisol (20b-DHF) or 20beta-corticosterone (20b-DHB), which are weak agonists of NR3C1 and NR3C2 in adipose tissue. The protein is Carbonyl reductase [NADPH] 1 of Oryctolagus cuniculus (Rabbit).